Reading from the N-terminus, the 292-residue chain is Cytochrome c1, heme protein, mitochondrial (292 aa).

The N-terminal 46 residues, 1-46 (MFRSFSTAAKQAVKGTYVQRAIVGGAAVVGIGASTMLYADSLTADA), are a transit peptide targeting the mitochondrion. At 47 to 253 (MTAAEHGLHA…SEPEHDERKR (207 aa)) the chain is on the mitochondrial intermembrane side. One can recognise a Cytochrome c domain in the interval 73 to 226 (SSIRRGYQVY…DLVEYEDGTP (154 aa)). The heme c site is built by Cys86, Cys89, and His90. A disordered region spans residues 117–137 (FEYDDEPDDQGNPKKRPGKLA). Residue Met210 participates in heme c binding. Residues 254–272 (LGLKAMIVLSSLYLLSVWV) traverse the membrane as a helical segment. The Mitochondrial matrix segment spans residues 273-292 (KKFKWASIKSRKIVFNPPKK).

Belongs to the cytochrome c family. Component of the ubiquinol-cytochrome c oxidoreductase (cytochrome b-c1 complex, complex III, CIII), a multisubunit enzyme composed of 3 respiratory subunits cytochrome b, cytochrome c1 and Rieske protein, 2 core protein subunits, and additional low-molecular weight protein subunits. The complex exists as an obligatory dimer and forms supercomplexes (SCs) in the inner mitochondrial membrane with cytochrome c oxidase (complex IV, CIV). Heme c serves as cofactor.

It is found in the mitochondrion inner membrane. The catalysed reaction is a quinol + 2 Fe(III)-[cytochrome c](out) = a quinone + 2 Fe(II)-[cytochrome c](out) + 2 H(+)(out). Its function is as follows. Component of the ubiquinol-cytochrome c oxidoreductase, a multisubunit transmembrane complex that is part of the mitochondrial electron transport chain which drives oxidative phosphorylation. The respiratory chain contains 3 multisubunit complexes succinate dehydrogenase (complex II, CII), ubiquinol-cytochrome c oxidoreductase (cytochrome b-c1 complex, complex III, CIII) and cytochrome c oxidase (complex IV, CIV), that cooperate to transfer electrons derived from NADH and succinate to molecular oxygen, creating an electrochemical gradient over the inner membrane that drives transmembrane transport and the ATP synthase. The cytochrome b-c1 complex catalyzes electron transfer from ubiquinol to cytochrome c, linking this redox reaction to translocation of protons across the mitochondrial inner membrane, with protons being carried across the membrane as hydrogens on the quinol. In the process called Q cycle, 2 protons are consumed from the matrix, 4 protons are released into the intermembrane space and 2 electrons are passed to cytochrome c. Cytochrome c1 is a catalytic core subunit containing a c-type heme. It transfers electrons from the [2Fe-2S] iron-sulfur cluster of the Rieske protein to cytochrome c. The polypeptide is Cytochrome c1, heme protein, mitochondrial (CYT1) (Kluyveromyces lactis (strain ATCC 8585 / CBS 2359 / DSM 70799 / NBRC 1267 / NRRL Y-1140 / WM37) (Yeast)).